We begin with the raw amino-acid sequence, 2056 residues long: E3 ubiquitin-protein ligase TRIP12 (2056 aa).

Composition is skewed to polar residues over residues 1–10 (MSSRPNNNPG) and 18–27 (RNTAGAQPQE). A disordered region spans residues 1-440 (MSSRPNNNPG…SGESESDDSE (440 aa)). Positions 39–51 (AENKTHSLPESRK) are enriched in basic and acidic residues. 2 stretches are compositionally biased toward polar residues: residues 58–67 (KVQSNTTSGP) and 153–168 (SQEQPFPSASLPSTSK). Composition is skewed to low complexity over residues 213–226 (LSKLASKSATSAKA) and 234–253 (SSSSASTSSSSSAVASVSAA). 2 stretches are compositionally biased toward polar residues: residues 317–327 (PGSSKTETSKP) and 363–375 (QKTTGSCASTSRR). A compositionally biased stretch (basic and acidic residues) spans 383-395 (AAAEARRQEKMAD). Over residues 415–433 (GAAASSSVAGAVGMTTSGE) the composition is skewed to low complexity. The 115-residue stretch at 791-905 (MLKKGNAQNT…DPELAKSFIK (115 aa)) folds into the WWE domain. The span at 1027-1042 (TTISTGSGTASGNSAA) shows a compositional bias: low complexity. Disordered regions lie at residues 1027–1147 (TTIS…ASKD), 1465–1500 (EEEESAKDTVGGKRGRAQTAPTKTSPRNSKKHDELW), and 1632–1651 (TNPEINQSDSQDSRVAPRLD). Over residues 1069-1082 (KRKRLPKRGPRRPK) the composition is skewed to basic residues. Basic and acidic residues predominate over residues 1085 to 1094 (PPRDEDKVDN). Composition is skewed to polar residues over residues 1095 to 1106 (QAKSPTTTQSPK) and 1119 to 1129 (RLSTQSNSNNI). The segment at 1560–1634 (EIIPTSEFNN…AMQRLLDTNP (75 aa)) is K-box. The 108-residue stretch at 1949 to 2056 (PDHGYTHDSR…REGQQSFHLS (108 aa)) folds into the HECT domain. The active-site Glycyl thioester intermediate is the C2023.

The protein belongs to the UPL family. K-HECT subfamily.

It localises to the nucleus. The protein resides in the nucleoplasm. The enzyme catalyses S-ubiquitinyl-[E2 ubiquitin-conjugating enzyme]-L-cysteine + [acceptor protein]-L-lysine = [E2 ubiquitin-conjugating enzyme]-L-cysteine + N(6)-ubiquitinyl-[acceptor protein]-L-lysine.. The protein operates within protein modification; protein ubiquitination. In terms of biological role, E3 ubiquitin-protein ligase involved in ubiquitin fusion degradation (UFD) pathway and regulation of DNA repair. Part of the ubiquitin fusion degradation (UFD) pathway, a process that mediates ubiquitination of protein at their N-terminus, regardless of the presence of lysine residues in target proteins. Acts as a key regulator of DNA damage response by acting as a suppressor of RNF168, an E3 ubiquitin-protein ligase that promotes accumulation of 'Lys-63'-linked histone H2A and H2AX at DNA damage sites, thereby acting as a guard against excessive spreading of ubiquitinated chromatin at damaged chromosomes. This chain is E3 ubiquitin-protein ligase TRIP12 (trip12), found in Xenopus tropicalis (Western clawed frog).